A 491-amino-acid polypeptide reads, in one-letter code: MNASLRRISVTVMALIVLLLLNATMTQVFTADGLRADPRNQRVLLDEYSRQRGQITAGGQLLAYSVATDGRFRFLRVYPNPEVYAPVTGFYSLRYSSTALERAEDPILNGSDRRLFGRRLADFFTGRDPRGGNVDTTINPRIQQAGWDAMQQGCYGPCKGAVVALEPSTGKILALVSSPSYDPNLLASHNPEVQAQAWQRLGDNPASPLTNRAISETYPPGSTFKVITTAAALAAGATETEQLTAAPTIPLPGSTAQLENYGGAPCGDEPTVSLREAFVKSCNTAFVQLGIRTGADALRSMARAFGLDSPPRPTPLQVAESTVGPIPDSAALGMTSIGQKDVALTPLANAEIAATIANGGITMRPYLVGSLKGPDLANISTTVGYQQRRAVSPQVAAKLTELMVGAEKVAQQKGAIPGVQIASKTGTAEHGTDPRHTPPHAWYIAFAPAQAPKVAVAVLVENGADRLSATGGALAAPIGRAVIEAALQGEP.

Residues 1 to 7 (MNASLRR) lie on the Cytoplasmic side of the membrane. A helical; Signal-anchor for type II membrane protein membrane pass occupies residues 8-28 (ISVTVMALIVLLLLNATMTQV). The Periplasmic portion of the chain corresponds to 29 to 491 (FTADGLRADP…VIEAALQGEP (463 aa)). The transpeptidase stretch occupies residues 160 to 484 (GAVVALEPST…AAPIGRAVIE (325 aa)). Serine 222 (acyl-ester intermediate) is an active-site residue.

Belongs to the transpeptidase family.

It localises to the cell inner membrane. It carries out the reaction Preferential cleavage: (Ac)2-L-Lys-D-Ala-|-D-Ala. Also transpeptidation of peptidyl-alanyl moieties that are N-acyl substituents of D-alanine.. It participates in cell wall biogenesis; peptidoglycan biosynthesis. Functionally, transpeptidase that catalyzes cross-linking of the peptidoglycan cell wall. Required for the regulation of cell length. The sequence is that of Peptidoglycan D,D-transpeptidase PbpA (pbpA) from Mycobacterium tuberculosis (strain CDC 1551 / Oshkosh).